A 274-amino-acid polypeptide reads, in one-letter code: Undecaprenyl-diphosphatase (274 aa).

8 helical membrane-spanning segments follow: residues 9 to 29, 47 to 67, 95 to 115, 120 to 140, 161 to 181, 197 to 217, 224 to 244, and 254 to 274; these read LEYL…FIPV, PGAS…AWYF, ILIG…FVPY, VLRS…FMYL, LIGF…GITI, FSFL…FISS, LGFF…LLAI, and NGLK…LLNL.

Belongs to the UppP family.

It localises to the cell inner membrane. It carries out the reaction di-trans,octa-cis-undecaprenyl diphosphate + H2O = di-trans,octa-cis-undecaprenyl phosphate + phosphate + H(+). Functionally, catalyzes the dephosphorylation of undecaprenyl diphosphate (UPP). Confers resistance to bacitracin. This is Undecaprenyl-diphosphatase from Prochlorococcus marinus (strain AS9601).